The following is a 496-amino-acid chain: Serine/threonine-protein kinase Sgk3 (496 aa).

The 113-residue stretch at 12 to 124 (SCPSVSIPSS…AFLQMDSPRH (113 aa)) folds into the PX domain. A disordered region spans residues 121 to 157 (SPRHQSDPSEDEDERSTPKPHSTSRNINLGPTGNPHA). Serine 126 and serine 129 each carry phosphoserine. The segment covering 139–151 (KPHSTSRNINLGP) has biased composition (polar residues). Positions 162–464 (FDFLKVIGKG…EETVPYSVCV (303 aa)) constitute a Protein kinase domain. Residues 168–176 (IGKGSFGKV) and lysine 191 contribute to the ATP site. A Nuclear localization signal motif is present at residues 195–205 (KKIVLNRKEQK). The active-site Proton acceptor is aspartate 286. Threonine 320 carries the phosphothreonine; by PDPK1 modification. Positions 420-496 (ESLSWTDLVQ…YAPPSEDLFL (77 aa)) constitute an AGC-kinase C-terminal domain. Serine 486 is subject to Phosphoserine.

This sequence belongs to the protein kinase superfamily. AGC Ser/Thr protein kinase family. In terms of assembly, interacts with GSK3B and FLII. Interacts with PDPK1 in a phosphorylation-dependent manner. Post-translationally, activated by phosphorylation on Ser-486 by an unknown kinase (may be mTORC2 but not confirmed), transforming it into a substrate for PDPK1 which then phosphorylates it on Thr-320.

The protein localises to the cytoplasmic vesicle. It is found in the early endosome. Its subcellular location is the recycling endosome. The enzyme catalyses L-seryl-[protein] + ATP = O-phospho-L-seryl-[protein] + ADP + H(+). It carries out the reaction L-threonyl-[protein] + ATP = O-phospho-L-threonyl-[protein] + ADP + H(+). Its activity is regulated as follows. Two specific sites, one in the kinase domain (Thr-320) and the other in the C-terminal regulatory region (Ser-486), need to be phosphorylated for its full activation. In terms of biological role, serine/threonine-protein kinase which is involved in the regulation of a wide variety of ion channels, membrane transporters, cell growth, proliferation, survival and migration. Up-regulates Na(+) channels: SCNN1A/ENAC and SCN5A, K(+) channels: KCNA3/KV1.3, KCNE1, KCNQ1 and KCNH2/HERG, epithelial Ca(2+) channels: TRPV5 and TRPV6, chloride channel: BSND, creatine transporter: SLC6A8, Na(+)/dicarboxylate cotransporter: SLC13A2/NADC1, Na(+)-dependent phosphate cotransporter: SLC34A2/NAPI-2B, amino acid transporters: SLC1A5/ASCT2 and SLC6A19, glutamate transporters: SLC1A3/EAAT1, SLC1A6/EAAT4 and SLC1A7/EAAT5, glutamate receptors: GRIA1/GLUR1 and GRIK2/GLUR6, Na(+)/H(+) exchanger: SLC9A3/NHE3, and the Na(+)/K(+) ATPase. Plays a role in the regulation of renal tubular phosphate transport and bone density. Phosphorylates NEDD4L and GSK3B. Positively regulates ER transcription activity through phosphorylation of FLII. Negatively regulates the function of ITCH/AIP4 via its phosphorylation and thereby prevents CXCR4 from being efficiently sorted to lysosomes. The polypeptide is Serine/threonine-protein kinase Sgk3 (Sgk3) (Rattus norvegicus (Rat)).